Here is a 305-residue protein sequence, read N- to C-terminus: Homoserine O-acetyltransferase (305 aa).

The active-site Acyl-thioester intermediate is Cys-142. 2 residues coordinate substrate: Lys-163 and Ser-192. Catalysis depends on His-235, which acts as the Proton acceptor. The active site involves Glu-237. Arg-249 is a binding site for substrate.

This sequence belongs to the MetA family.

It is found in the cytoplasm. It catalyses the reaction L-homoserine + acetyl-CoA = O-acetyl-L-homoserine + CoA. The protein operates within amino-acid biosynthesis; L-methionine biosynthesis via de novo pathway; O-acetyl-L-homoserine from L-homoserine: step 1/1. Functionally, transfers an acetyl group from acetyl-CoA to L-homoserine, forming acetyl-L-homoserine. This Roseobacter denitrificans (strain ATCC 33942 / OCh 114) (Erythrobacter sp. (strain OCh 114)) protein is Homoserine O-acetyltransferase.